We begin with the raw amino-acid sequence, 259 residues long: Glucosamine-6-phosphate deaminase (259 aa).

Catalysis depends on Asp-66, which acts as the Proton acceptor; for enolization step. Asp-135 (for ring-opening step) is an active-site residue. The active-site Proton acceptor; for ring-opening step is His-137. The active-site For ring-opening step is the Glu-142.

It belongs to the glucosamine/galactosamine-6-phosphate isomerase family. NagB subfamily.

It catalyses the reaction alpha-D-glucosamine 6-phosphate + H2O = beta-D-fructose 6-phosphate + NH4(+). The protein operates within amino-sugar metabolism; N-acetylneuraminate degradation; D-fructose 6-phosphate from N-acetylneuraminate: step 5/5. Its function is as follows. Catalyzes the reversible isomerization-deamination of glucosamine 6-phosphate (GlcN6P) to form fructose 6-phosphate (Fru6P) and ammonium ion. The polypeptide is Glucosamine-6-phosphate deaminase (Rhodococcus opacus (strain B4)).